The sequence spans 126 residues: Aspartate 1-decarboxylase (126 aa).

Residue Ser25 is the Schiff-base intermediate with substrate; via pyruvic acid of the active site. Position 25 is a pyruvic acid (Ser) (Ser25). Residue Thr57 coordinates substrate. Catalysis depends on Tyr58, which acts as the Proton donor. Residue 72–74 (GAT) coordinates substrate.

The protein belongs to the PanD family. In terms of assembly, heterooctamer of four alpha and four beta subunits. Requires pyruvate as cofactor. Is synthesized initially as an inactive proenzyme, which is activated by self-cleavage at a specific serine bond to produce a beta-subunit with a hydroxyl group at its C-terminus and an alpha-subunit with a pyruvoyl group at its N-terminus.

The protein localises to the cytoplasm. It catalyses the reaction L-aspartate + H(+) = beta-alanine + CO2. Its pathway is cofactor biosynthesis; (R)-pantothenate biosynthesis; beta-alanine from L-aspartate: step 1/1. In terms of biological role, catalyzes the pyruvoyl-dependent decarboxylation of aspartate to produce beta-alanine. In Campylobacter jejuni subsp. doylei (strain ATCC BAA-1458 / RM4099 / 269.97), this protein is Aspartate 1-decarboxylase.